Here is a 406-residue protein sequence, read N- to C-terminus: S-adenosylmethionine synthase (406 aa).

His17 lines the ATP pocket. Mg(2+) is bound at residue Asp19. A K(+)-binding site is contributed by Glu45. L-methionine-binding residues include Glu58 and Gln101. The tract at residues 101–111 (QSAEINQGVAR) is flexible loop. Residues 178–180 (DGK), Asp258, 264–265 (RK), Ala281, and Lys285 each bind ATP. Residue Asp258 participates in L-methionine binding. Lys289 provides a ligand contact to L-methionine.

This sequence belongs to the AdoMet synthase family. As to quaternary structure, homotetramer; dimer of dimers. Mg(2+) is required as a cofactor. It depends on K(+) as a cofactor.

The protein localises to the cytoplasm. It carries out the reaction L-methionine + ATP + H2O = S-adenosyl-L-methionine + phosphate + diphosphate. It participates in amino-acid biosynthesis; S-adenosyl-L-methionine biosynthesis; S-adenosyl-L-methionine from L-methionine: step 1/1. Functionally, catalyzes the formation of S-adenosylmethionine (AdoMet) from methionine and ATP. The overall synthetic reaction is composed of two sequential steps, AdoMet formation and the subsequent tripolyphosphate hydrolysis which occurs prior to release of AdoMet from the enzyme. This Bifidobacterium longum (strain NCC 2705) protein is S-adenosylmethionine synthase.